A 283-amino-acid chain; its full sequence is Protein/nucleic acid deglycase HchA (283 aa).

Residues His-86, Glu-91, and His-123 each contribute to the Zn(2+) site. Cys-185 serves as the catalytic Nucleophile.

Belongs to the peptidase C56 family. HchA subfamily. Homodimer.

The protein localises to the cytoplasm. It catalyses the reaction N(omega)-(1-hydroxy-2-oxopropyl)-L-arginyl-[protein] + H2O = lactate + L-arginyl-[protein] + H(+). It carries out the reaction N(6)-(1-hydroxy-2-oxopropyl)-L-lysyl-[protein] + H2O = lactate + L-lysyl-[protein] + H(+). The catalysed reaction is S-(1-hydroxy-2-oxopropyl)-L-cysteinyl-[protein] + H2O = lactate + L-cysteinyl-[protein] + H(+). The enzyme catalyses N(omega)-(1-hydroxy-2-oxoethyl)-L-arginyl-[protein] + H2O = L-arginyl-[protein] + glycolate + H(+). It catalyses the reaction N(6)-(1-hydroxy-2-oxoethyl)-L-lysyl-[protein] + H2O = glycolate + L-lysyl-[protein] + H(+). It carries out the reaction S-(1-hydroxy-2-oxoethyl)-L-cysteinyl-[protein] + H2O = glycolate + L-cysteinyl-[protein] + H(+). The catalysed reaction is N(2)-(1-hydroxy-2-oxopropyl)-dGTP + H2O = lactate + dGTP + H(+). The enzyme catalyses N(2)-(1-hydroxy-2-oxopropyl)-GTP + H2O = lactate + GTP + H(+). It catalyses the reaction N(2)-(1-hydroxy-2-oxopropyl)-GDP + H2O = lactate + GDP + H(+). It carries out the reaction N(2)-(1-hydroxy-2-oxopropyl)-GMP + H2O = lactate + GMP + H(+). The catalysed reaction is N(2)-(1-hydroxy-2-oxoethyl)-dGTP + H2O = dGTP + glycolate + H(+). The enzyme catalyses N(2)-(1-hydroxy-2-oxoethyl)-GTP + H2O = glycolate + GTP + H(+). It catalyses the reaction N(2)-(1-hydroxy-2-oxoethyl)-GDP + H2O = glycolate + GDP + H(+). It carries out the reaction N(2)-(1-hydroxy-2-oxoethyl)-GMP + H2O = glycolate + GMP + H(+). The catalysed reaction is an N(2)-(1-hydroxy-2-oxopropyl)-guanosine in RNA + H2O = a guanosine in RNA + lactate + H(+). The enzyme catalyses an N(2)-(1-hydroxy-2-oxopropyl)-2'-deoxyguanosine in DNA + H2O = a 2'-deoxyguanosine in DNA + lactate + H(+). It catalyses the reaction an N(2)-(1-hydroxy-2-oxoethyl)-guanosine in RNA + H2O = a guanosine in RNA + glycolate + H(+). It carries out the reaction an N(2)-(1-hydroxy-2-oxoethyl)-2'-deoxyguanosine in DNA + H2O = a 2'-deoxyguanosine in DNA + glycolate + H(+). In terms of biological role, protein and nucleotide deglycase that catalyzes the deglycation of the Maillard adducts formed between amino groups of proteins or nucleotides and reactive carbonyl groups of glyoxals. Thus, functions as a protein deglycase that repairs methylglyoxal- and glyoxal-glycated proteins, and releases repaired proteins and lactate or glycolate, respectively. Deglycates cysteine, arginine and lysine residues in proteins, and thus reactivates these proteins by reversing glycation by glyoxals. Acts on early glycation intermediates (hemithioacetals and aminocarbinols), preventing the formation of Schiff bases and advanced glycation endproducts (AGE). Also functions as a nucleotide deglycase able to repair glycated guanine in the free nucleotide pool (GTP, GDP, GMP, dGTP) and in DNA and RNA. Is thus involved in a major nucleotide repair system named guanine glycation repair (GG repair), dedicated to reversing methylglyoxal and glyoxal damage via nucleotide sanitization and direct nucleic acid repair. Plays an important role in protecting cells from carbonyl stress. In Escherichia coli (strain 55989 / EAEC), this protein is Protein/nucleic acid deglycase HchA.